We begin with the raw amino-acid sequence, 391 residues long: Adhesion defective protein 1 (391 aa).

The span at Ser180 to Gln190 shows a compositional bias: polar residues. 2 disordered regions span residues Ser180 to Pro217 and Val366 to Val391. The span at Ser201–Ser211 shows a compositional bias: low complexity. A compositionally biased stretch (polar residues) spans Asn370–Leu383.

It belongs to the adn1/SEU family.

The protein resides in the nucleus. Functionally, probable transcriptional regulator involved in cell adhesion. This chain is Adhesion defective protein 1 (adn1), found in Schizosaccharomyces pombe (strain 972 / ATCC 24843) (Fission yeast).